Consider the following 356-residue polypeptide: Photosynthetic reaction center cytochrome c subunit (356 aa).

A signal peptide spans 1 to 20; the sequence is MKQLIVNSVATVALASLVAG. A lipid anchor (S-diacylglycerol cysteine) is attached at cysteine 21. Heme is bound by residues methionine 94, cysteine 107, cysteine 110, histidine 111, methionine 130, histidine 144, cysteine 152, cysteine 155, histidine 156, methionine 253, cysteine 264, cysteine 267, histidine 268, cysteine 325, cysteine 328, and histidine 329.

In terms of assembly, component of the photosynthetic reaction center composed of protein subunits L (PufL), M (PufM), H (PuhA) and cytochrome C (PufC). In terms of processing, binds 4 heme groups per subunit. Post-translationally, after the signal sequence is removed, the N-terminal cysteine is modified to form a diacylglyceride thioether, but the alpha-amino group is free and is not N-palmitoylated.

The protein localises to the cellular chromatophore membrane. Functionally, the reaction center of purple bacteria contains a tightly bound cytochrome molecule which re-reduces the photo oxidized primary electron donor. The protein is Photosynthetic reaction center cytochrome c subunit of Blastochloris viridis (Rhodopseudomonas viridis).